Consider the following 115-residue polypeptide: Small ribosomal subunit protein uS17 (115 aa).

It belongs to the universal ribosomal protein uS17 family. As to quaternary structure, part of the 30S ribosomal subunit.

In terms of biological role, one of the primary rRNA binding proteins, it binds specifically to the 5'-end of 16S ribosomal RNA. The protein is Small ribosomal subunit protein uS17 of Granulibacter bethesdensis (strain ATCC BAA-1260 / CGDNIH1).